Here is a 500-residue protein sequence, read N- to C-terminus: Probable malate:quinone oxidoreductase (500 aa).

Belongs to the MQO family. FAD is required as a cofactor.

The catalysed reaction is (S)-malate + a quinone = a quinol + oxaloacetate. The protein operates within carbohydrate metabolism; tricarboxylic acid cycle; oxaloacetate from (S)-malate (quinone route): step 1/1. This is Probable malate:quinone oxidoreductase from Bacillus anthracis (strain A0248).